Here is a 200-residue protein sequence, read N- to C-terminus: Pyridoxal 5'-phosphate synthase subunit PdxT (200 aa).

52 to 54 (GES) is an L-glutamine binding site. Residue Cys84 is the Nucleophile of the active site. L-glutamine contacts are provided by residues Arg116 and 145 to 146 (IR). Residues His181 and Glu183 each act as charge relay system in the active site.

This sequence belongs to the glutaminase PdxT/SNO family. As to quaternary structure, in the presence of PdxS, forms a dodecamer of heterodimers. Only shows activity in the heterodimer.

The catalysed reaction is aldehydo-D-ribose 5-phosphate + D-glyceraldehyde 3-phosphate + L-glutamine = pyridoxal 5'-phosphate + L-glutamate + phosphate + 3 H2O + H(+). It catalyses the reaction L-glutamine + H2O = L-glutamate + NH4(+). It functions in the pathway cofactor biosynthesis; pyridoxal 5'-phosphate biosynthesis. In terms of biological role, catalyzes the hydrolysis of glutamine to glutamate and ammonia as part of the biosynthesis of pyridoxal 5'-phosphate. The resulting ammonia molecule is channeled to the active site of PdxS. This chain is Pyridoxal 5'-phosphate synthase subunit PdxT, found in Saccharolobus islandicus (strain L.S.2.15 / Lassen #1) (Sulfolobus islandicus).